The following is a 348-amino-acid chain: Anthranilate phosphoribosyltransferase (348 aa).

5-phospho-alpha-D-ribose 1-diphosphate contacts are provided by residues G91, 94–95 (GD), T99, 101–104 (NIST), 119–127 (KHGNRSASG), and S131. Residue G91 coordinates anthranilate. S103 provides a ligand contact to Mg(2+). N122 is an anthranilate binding site. R177 contributes to the anthranilate binding site. Positions 236 and 237 each coordinate Mg(2+).

It belongs to the anthranilate phosphoribosyltransferase family. In terms of assembly, homodimer. It depends on Mg(2+) as a cofactor.

It carries out the reaction N-(5-phospho-beta-D-ribosyl)anthranilate + diphosphate = 5-phospho-alpha-D-ribose 1-diphosphate + anthranilate. It participates in amino-acid biosynthesis; L-tryptophan biosynthesis; L-tryptophan from chorismate: step 2/5. Functionally, catalyzes the transfer of the phosphoribosyl group of 5-phosphorylribose-1-pyrophosphate (PRPP) to anthranilate to yield N-(5'-phosphoribosyl)-anthranilate (PRA). In Synechococcus elongatus (strain ATCC 33912 / PCC 7942 / FACHB-805) (Anacystis nidulans R2), this protein is Anthranilate phosphoribosyltransferase.